The chain runs to 418 residues: Actin-related protein 3B (418 aa).

This sequence belongs to the actin family. ARP3 subfamily. Interacts with the Arp2/3 complex composed of ARP2, ARP3, ARPC1B, ARPC1B/p41-ARC, ARPC2/p34-ARC, ARPC3/p21-ARC, ARPC4/p20-ARC and ARPC5/p16-ARC. Detected in fetal brain. Detected throughout the adult brain, in neurons from gray matter, but not in white matter. Detected in liver, skeletal muscle and pancreas. Detected in lung adenocarcinoma cells with low metastatic potential, but not in lung adenocarcinoma cells with high metastatic potential.

The protein localises to the cytoplasm. It localises to the cytoskeleton. The protein resides in the cell projection. Functionally, plays a role in the organization of the actin cytoskeleton. May function as ATP-binding component of the Arp2/3 complex which is involved in regulation of actin polymerization and together with an activating nucleation-promoting factor (NPF) mediates the formation of branched actin networks. May decrease the metastatic potential of tumors. The chain is Actin-related protein 3B (ACTR3B) from Homo sapiens (Human).